Here is a 487-residue protein sequence, read N- to C-terminus: 2-aminomuconic semialdehyde dehydrogenase (487 aa).

Position 231 to 236 (Gly231 to Ala236) interacts with NAD(+). The active-site Proton acceptor is the Glu253. Residue Cys287 is the Nucleophile of the active site.

Belongs to the aldehyde dehydrogenase family.

Its subcellular location is the cytoplasm. The enzyme catalyses 2-aminomuconate 6-semialdehyde + NAD(+) + H2O = (2Z,4E)-2-aminomuconate + NADH + 2 H(+). Its pathway is amino-acid degradation; L-kynurenine degradation. Catalyzes the NAD-dependent oxidation of 2-aminomuconic semialdehyde of the kynurenine metabolic pathway in L-tryptophan degradation. The chain is 2-aminomuconic semialdehyde dehydrogenase (ALDH8A1) from Bos taurus (Bovine).